Consider the following 130-residue polypeptide: MKVAVGVHIIADLYGVDARLISSSEAISPIMENAIQEGHLTKISSEYYQFRPMGASGIALLAESHLSFHTWPEYGLVTLDIYTCGDRSNADRAFDYIIKVLKPTSVDYRKMERGSQIKEDVRITDPQMML.

The Schiff-base intermediate with substrate; via pyruvic acid role is filled by Ser-64. The residue at position 64 (Ser-64) is a Pyruvic acid (Ser); by autocatalysis. Catalysis depends on His-69, which acts as the Proton acceptor; for processing activity. Cys-84 serves as the catalytic Proton donor; for catalytic activity.

It belongs to the prokaryotic AdoMetDC family. Type 1 subfamily. In terms of assembly, heterotetramer of two alpha and two beta chains arranged as a dimer of alpha/beta heterodimers. The cofactor is pyruvate. Is synthesized initially as an inactive proenzyme. Formation of the active enzyme involves a self-maturation process in which the active site pyruvoyl group is generated from an internal serine residue via an autocatalytic post-translational modification. Two non-identical subunits are generated from the proenzyme in this reaction, and the pyruvate is formed at the N-terminus of the alpha chain, which is derived from the carboxyl end of the proenzyme. The post-translation cleavage follows an unusual pathway, termed non-hydrolytic serinolysis, in which the side chain hydroxyl group of the serine supplies its oxygen atom to form the C-terminus of the beta chain, while the remainder of the serine residue undergoes an oxidative deamination to produce ammonia and the pyruvoyl group blocking the N-terminus of the alpha chain.

The catalysed reaction is S-adenosyl-L-methionine + H(+) = S-adenosyl 3-(methylsulfanyl)propylamine + CO2. The protein operates within amine and polyamine biosynthesis; S-adenosylmethioninamine biosynthesis; S-adenosylmethioninamine from S-adenosyl-L-methionine: step 1/1. Functionally, catalyzes the decarboxylation of S-adenosylmethionine to S-adenosylmethioninamine (dcAdoMet), the propylamine donor required for the synthesis of the polyamines spermine and spermidine from the diamine putrescine. The chain is S-adenosylmethionine decarboxylase proenzyme from Picrophilus torridus (strain ATCC 700027 / DSM 9790 / JCM 10055 / NBRC 100828 / KAW 2/3).